The chain runs to 91 residues: MSRTIFCTFLQRDAEGQDFQLYPGELGKRIYNEISKEAWAQWQKKQTMLINEKKLNMMNPEHRKLLEEEMVNFLFEGKEVHIEGYTPPEQQ.

This sequence belongs to the Fe(2+)-trafficking protein family. Monomer.

In terms of biological role, could be a mediator in iron transactions between iron acquisition and iron-requiring processes, such as synthesis and/or repair of Fe-S clusters in biosynthetic enzymes. This chain is Probable Fe(2+)-trafficking protein, found in Cronobacter sakazakii (strain ATCC BAA-894) (Enterobacter sakazakii).